A 174-amino-acid polypeptide reads, in one-letter code: Repair DNA polymerase X (174 aa).

Residues 42–51 (REEKMLNDVD) are involved in ssDNA binding. The Mg(2+) site is built by Asp-49 and Asp-51. The cysteines at positions 81 and 86 are disulfide-linked. Asp-100 is a binding site for Mg(2+).

It belongs to the DNA polymerase type-X family. Requires Mg(2+) as cofactor.

The protein resides in the virion. The enzyme catalyses DNA(n) + a 2'-deoxyribonucleoside 5'-triphosphate = DNA(n+1) + diphosphate. Error-prone polymerase lacking a proofreading 3'-5' exonuclease which catalyzes the gap-filling reaction during the DNA repair process. Specifically binds intermediates in the single-nucleotide base-excision repair process. Also catalyzes DNA polymerization with low nucleotide-insertion fidelity. Probably acts as a strategic DNA mutase, which gives rise to a rapid emergence of variants. Generates mismatched G-G pairs, in that case, the polymerase first binds the deoxynucleotide followed by mismatch formation. Together with the viral DNA ligase, fills the single nucleotide gaps generated by the AP endonuclease. Binds DNA with high affinity via the helix alphaE. This is Repair DNA polymerase X from Ornithodoros (relapsing fever ticks).